The primary structure comprises 332 residues: Beta-ketoacyl-[acyl-carrier-protein] synthase III (332 aa).

Catalysis depends on residues Cys-114 and His-255. Residues Gln-256–Arg-260 are ACP-binding. Asn-285 is a catalytic residue.

It belongs to the thiolase-like superfamily. FabH family. As to quaternary structure, homodimer.

It is found in the cytoplasm. It catalyses the reaction malonyl-[ACP] + acetyl-CoA + H(+) = 3-oxobutanoyl-[ACP] + CO2 + CoA. It functions in the pathway lipid metabolism; fatty acid biosynthesis. Catalyzes the condensation reaction of fatty acid synthesis by the addition to an acyl acceptor of two carbons from malonyl-ACP. Catalyzes the first condensation reaction which initiates fatty acid synthesis and may therefore play a role in governing the total rate of fatty acid production. Possesses both acetoacetyl-ACP synthase and acetyl transacylase activities. Its substrate specificity determines the biosynthesis of branched-chain and/or straight-chain of fatty acids. The polypeptide is Beta-ketoacyl-[acyl-carrier-protein] synthase III (Sulfurimonas denitrificans (strain ATCC 33889 / DSM 1251) (Thiomicrospira denitrificans (strain ATCC 33889 / DSM 1251))).